The primary structure comprises 554 residues: 3-(3-hydroxy-phenyl)propionate/3-hydroxycinnamic acid hydroxylase (554 aa).

FAD contacts are provided by residues 17–46 (QVAIAGAGPVGLMMANYLGQMGIDVLVVEK) and 285–295 (FRIDRVLLAGD).

This sequence belongs to the PheA/TfdB FAD monooxygenase family. It depends on FAD as a cofactor.

The enzyme catalyses 3-(3-hydroxyphenyl)propanoate + NADH + O2 + H(+) = 3-(2,3-dihydroxyphenyl)propanoate + NAD(+) + H2O. It carries out the reaction (2E)-3-(3-hydroxyphenyl)prop-2-enoate + NADH + O2 + H(+) = (2E)-3-(2,3-dihydroxyphenyl)prop-2-enoate + NAD(+) + H2O. Its pathway is aromatic compound metabolism; 3-phenylpropanoate degradation. Functionally, catalyzes the insertion of one atom of molecular oxygen into position 2 of the phenyl ring of 3-(3-hydroxyphenyl)propionate (3-HPP) and hydroxycinnamic acid (3HCI). The polypeptide is 3-(3-hydroxy-phenyl)propionate/3-hydroxycinnamic acid hydroxylase (Escherichia coli O139:H28 (strain E24377A / ETEC)).